A 594-amino-acid chain; its full sequence is Gamma-terpinene synthase, chloroplastic (594 aa).

Residues 1-44 (MATLSMQVSILSKEVKNVNNIGMRASKPMVARRVSTTRLRPICS) constitute a chloroplast transit peptide. Positions 347 and 351 each coordinate Mn(2+). The short motif at 347 to 351 (DDVYD) is the DDXXD motif element. Homodimerization stretches follow at residues 353 to 359 (YGTLDEL) and 425 to 462 (EAKW…FTLP). Asp491 and Glu499 together coordinate Mn(2+).

The protein belongs to the terpene synthase family. In terms of assembly, homodimer. Requires Mn(2+) as cofactor. Mg(2+) serves as cofactor. Expressed in peltate glandular trichomes.

The protein localises to the plastid. It localises to the chloroplast. The enzyme catalyses (2E)-geranyl diphosphate = gamma-terpinene + diphosphate. It carries out the reaction (2E)-geranyl diphosphate = alpha-terpinene + diphosphate. The protein operates within secondary metabolite biosynthesis; terpenoid biosynthesis. Functionally, involved in the biosynthesis of phenolic monoterpenes natural products thymol and carvacrol which have a broad range of biological activities acting as antimicrobial compounds, insecticides, antioxidants and pharmaceutical agents. Monoterpene synthase which catalyzes the conversion of geranyl diphosphate (GPP) to gamma-terpinene and the minor products alpha-thujene, alpha-terpinene, myrcene, sabinene, (+)-R-limonene, alpha-pinene and alpha-phellandrene. The protein is Gamma-terpinene synthase, chloroplastic of Origanum vulgare (Wild marjoram).